The sequence spans 229 residues: MALADDLKKWVGETFTGKWEVQETTSVPNPEDLRLNSNHAKDLKAATVLYADLDGSTDMVNTKKWQFSAQIYKTFLKCASDIIRDEGGNITAYDGDRVMAVFTGNSKNTSAARCALKINSAVLDIIQPAIAKKWQTDFVLRHVVGIDTSQLRTARIGIRGDNDLVWIGRAANYAAKLTNLAGKPTRITADVYNKLADKLKYANGVDMWAPEHWDDMGIWTYTSTWKWTV.

In terms of domain architecture, Guanylate cyclase spans 47 to 178; it reads TVLYADLDGS…RAANYAAKLT (132 aa). Y50 provides a ligand contact to a ribonucleoside 5'-triphosphate. Mn(2+)-binding residues include D52 and D96. R97 is a binding site for a ribonucleoside 5'-triphosphate.

It belongs to the adenylyl cyclase class-4/guanylyl cyclase family. Pyrimidine cyclase subfamily. Homodimer. Requires Mn(2+) as cofactor.

Its subcellular location is the cytoplasm. It catalyses the reaction UTP = 3',5'-cyclic UMP + diphosphate. Pycsar (pyrimidine cyclase system for antiphage resistance) provides immunity against bacteriophage. The pyrimidine cyclase (PycC) synthesizes cyclic nucleotides in response to infection; these serve as specific second messenger signals. The signals activate the adjacent effector, leading to bacterial cell death and abortive phage infection. A clade B Pycsar system. Functionally, the pyrimidine cyclase gene of a two-gene Pycsar system, generates cyclic UMP (cUMP) from UTP, has little to no activity on ATP, CTP or GTP. Expression of this and adjacent effector BcPycTIR (AC A0A0J5WTU0) probably confers resistance to bacteriophage. The genes are probably only expressed in response to bacteriophage infection. The polypeptide is Uridylate cyclase (Burkholderia cepacia (Pseudomonas cepacia)).